Consider the following 104-residue polypeptide: U20-lycotoxin-Ls1a (104 aa).

The signal sequence occupies residues 1 to 30 (MFSTSDQVSKMNSRILSALLILGIATCVIA). The WAP domain maps to 31–76 (GGFCPKSRHPQCNLSYKINDCCAQSDCRVGSVCCVEGCGNVCRAES). Cystine bridges form between C34/C64, C42/C68, C51/C63, C52/C90, and C57/C72.

This sequence belongs to the venom protein 11 family. 02 (wap-2) subfamily. Post-translationally, contains 5 disulfide bonds. As to expression, expressed by the venom gland.

The protein localises to the secreted. Functionally, has antibacterial activity. The sequence is that of U20-lycotoxin-Ls1a from Lycosa singoriensis (Wolf spider).